A 100-amino-acid polypeptide reads, in one-letter code: Urease subunit gamma (100 aa).

This sequence belongs to the urease gamma subunit family. Heterotrimer of UreA (gamma), UreB (beta) and UreC (alpha) subunits. Three heterotrimers associate to form the active enzyme.

It is found in the cytoplasm. The catalysed reaction is urea + 2 H2O + H(+) = hydrogencarbonate + 2 NH4(+). It participates in nitrogen metabolism; urea degradation; CO(2) and NH(3) from urea (urease route): step 1/1. The protein is Urease subunit gamma of Acetivibrio thermocellus (strain ATCC 27405 / DSM 1237 / JCM 9322 / NBRC 103400 / NCIMB 10682 / NRRL B-4536 / VPI 7372) (Clostridium thermocellum).